The primary structure comprises 162 residues: Phospholipase A and acyltransferase 3 (162 aa).

At 1 to 133 (MRAPIPEPKP…VARSDQVRDV (133 aa)) the chain is on the cytoplasmic side. The LRAT domain occupies 13 to 129 (LIEIFRPFYR…LRYGVARSDQ (117 aa)). Active-site residues include His-23 and His-35. Cys-113 (acyl-thioester intermediate) is an active-site residue. The helical transmembrane segment at 134–154 (IIAASAAGMGLAAMSLIGVMF) threads the bilayer. Residues 155–162 (SRNKRQKQ) lie on the Lumenal side of the membrane.

This sequence belongs to the H-rev107 family. Interacts with PPP2R1A; this interaction might decrease PP2A activity.

The protein resides in the cell membrane. It is found in the cytoplasm. The protein localises to the cytosol. It localises to the perinuclear region. Its subcellular location is the peroxisome membrane. The protein resides in the mitochondrion membrane. It is found in the nucleus envelope. The protein localises to the lysosome membrane. It localises to the endoplasmic reticulum membrane. It carries out the reaction a 1,2-diacyl-sn-glycero-3-phosphocholine + H2O = a 1-acyl-sn-glycero-3-phosphocholine + a fatty acid + H(+). The catalysed reaction is a 1,2-diacyl-sn-glycero-3-phosphocholine + H2O = a 2-acyl-sn-glycero-3-phosphocholine + a fatty acid + H(+). The enzyme catalyses 1,2-dihexadecanoyl-sn-glycero-3-phosphocholine + H2O = 1-hexadecanoyl-sn-glycero-3-phosphocholine + hexadecanoate + H(+). It catalyses the reaction 1,2-dihexadecanoyl-sn-glycero-3-phosphocholine + H2O = 2-hexadecanoyl-sn-glycero-3-phosphocholine + hexadecanoate + H(+). It carries out the reaction 1-hexadecanoyl-2-(9Z-octadecenoyl)-sn-glycero-3-phosphocholine + H2O = 2-(9Z-octadecenoyl)-sn-glycero-3-phosphocholine + hexadecanoate + H(+). The catalysed reaction is 1-hexadecanoyl-2-(9Z-octadecenoyl)-sn-glycero-3-phosphocholine + H2O = 1-hexadecanoyl-sn-glycero-3-phosphocholine + (9Z)-octadecenoate + H(+). The enzyme catalyses 1-hexadecanoyl-2-(5Z,8Z,11Z,14Z-eicosatetraenoyl)-sn-glycero-3-phosphocholine + H2O = 1-hexadecanoyl-sn-glycero-3-phosphocholine + (5Z,8Z,11Z,14Z)-eicosatetraenoate + H(+). It catalyses the reaction 1-hexadecanoyl-2-(5Z,8Z,11Z,14Z-eicosatetraenoyl)-sn-glycero-3-phosphocholine + H2O = 2-(5Z,8Z,11Z,14Z)-eicosatetraenoyl-sn-glycero-3-phosphocholine + hexadecanoate + H(+). It carries out the reaction 1-hexadecanoyl-2-(9Z,12Z-octadecadienoyl)-sn-glycero-3-phosphoethanolamine + H2O = 1-hexadecanoyl-sn-glycero-3-phosphoethanolamine + (9Z,12Z)-octadecadienoate + H(+). The catalysed reaction is 1-hexadecanoyl-2-(9Z,12Z-octadecadienoyl)-sn-glycero-3-phosphoethanolamine + H2O = 2-(9Z,12Z)-octadecadienoyl-sn-glycero-3-phosphoethanolamine + hexadecanoate + H(+). The enzyme catalyses 1-hexadecanoyl-2-(5Z,8Z,11Z,14Z-eicosatetraenoyl)-sn-glycero-3-phosphoethanolamine + H2O = 1-hexadecanoyl-sn-glycero-3-phosphoethanolamine + (5Z,8Z,11Z,14Z)-eicosatetraenoate + H(+). It catalyses the reaction 1-hexadecanoyl-2-(5Z,8Z,11Z,14Z-eicosatetraenoyl)-sn-glycero-3-phosphoethanolamine + H2O = 2-(5Z,8Z,11Z,14Z)-eicosatetraenoyl-sn-glycero-3-phosphoethanolamine + hexadecanoate + H(+). It carries out the reaction 1-hexanoyl-2-acyl-sn-glycero-3-phosphocholine + H2O = hexanoate + a 2-acyl-sn-glycero-3-phosphocholine + H(+). The catalysed reaction is 1-hexanoyl-2-acyl-sn-glycero-3-phosphocholine + H2O = 1-hexanoyl-sn-glycero-3-phosphocholine + a fatty acid + H(+). The enzyme catalyses 1,2-diheptadecanoyl-sn-glycero-3-phosphoethanolamine + 1-(9Z-octadecenoyl)-2-hexadecanoyl-sn-glycero-3-phosphocholine = 1,2-diheptadecanoyl-sn-glycero-3-phospho-N-hexadecanoyl-ethanolamine + 1-(9Z-octadecenoyl)-sn-glycero-3-phosphocholine + H(+). It catalyses the reaction 1,2-diheptadecanoyl-sn-glycero-3-phosphoethanolamine + 1-(9Z-octadecenoyl)-2-hexadecanoyl-sn-glycero-3-phosphocholine = 1,2-diheptadecanoyl-sn-glycero-3-phospho-N-(9Z-octadecenoyl)-ethanolamine + 2-hexadecanoyl-sn-glycero-3-phosphocholine + H(+). It carries out the reaction 1,2-dihexanoyl-sn-glycero-3-phosphoethanolamine + 2-heptanoyl-sn-glycero-3-phosphocholine = hexanoyl-sn-glycero-3-phosphoethanolamine + 1-hexanoyl-2-heptanoyl-sn-glycero-3-phosphocholine. The catalysed reaction is 1-hexadecanoyl-2-octadecanoyl-sn-glycero-3-phosphocholine + H2O = octadecanoate + 1-hexadecanoyl-sn-glycero-3-phosphocholine + H(+). The enzyme catalyses 1-hexadecanoyl-2-octadecanoyl-sn-glycero-3-phosphocholine + H2O = 2-octadecanoyl-sn-glycero-3-phosphocholine + hexadecanoate + H(+). It catalyses the reaction 1-octadecanoyl-2-hexadecanoyl-sn-glycero-3-phosphocholine + H2O = 1-octadecanoyl-sn-glycero-3-phosphocholine + hexadecanoate + H(+). It carries out the reaction 1-octadecanoyl-2-hexadecanoyl-sn-glycero-3-phosphocholine + H2O = 2-hexadecanoyl-sn-glycero-3-phosphocholine + octadecanoate + H(+). The catalysed reaction is 1-hexadecanoyl-2-(9Z,12Z-octadecadienoyl)-sn-glycero-3-phosphocholine + H2O = (9Z,12Z)-octadecadienoate + 1-hexadecanoyl-sn-glycero-3-phosphocholine + H(+). The enzyme catalyses 1-hexadecanoyl-2-(9Z,12Z-octadecadienoyl)-sn-glycero-3-phosphocholine + H2O = 2-(9Z,12Z-octadecadienoyl)-sn-glycero-3-phosphocholine + hexadecanoate + H(+). It catalyses the reaction 1,2-di-(9Z-octadecenoyl)-sn-glycero-3-phosphocholine + H2O = 2-(9Z-octadecenoyl)-sn-glycero-3-phosphocholine + (9Z)-octadecenoate + H(+). It carries out the reaction 1,2-dihexadecanoyl-sn-glycero-3-phosphocholine + H2O = hexadecanoyl-sn-glycero-3-phosphocholine + hexadecanoate + H(+). The catalysed reaction is 1,2-di-(9Z-octadecenoyl)-sn-glycero-3-phosphocholine + H2O = 1-(9Z-octadecenoyl)-sn-glycero-3-phosphocholine + (9Z)-octadecenoate + H(+). The enzyme catalyses 1,2-di-(9Z-octadecenoyl)-sn-glycero-3-phosphoethanolamine + 1,2-dihexadecanoyl-sn-glycero-3-phosphocholine = hexadecanoyl-sn-glycero-3-phosphocholine + N-hexadecanoyl-1,2-di-(9Z-octadecenoyl)-sn-glycero-3-phosphoethanolamine + H(+). It catalyses the reaction 1,2-di-(9Z,12Z-octadecadienoyl)-sn-glycero-3-phosphocholine + H2O = 1-(9Z,12Z)-octadecadienoyl-sn-glycero-3-phosphocholine + (9Z,12Z)-octadecadienoate + H(+). Functionally, exhibits both phospholipase A1/2 and acyltransferase activities. Shows phospholipase A1 (PLA1) and A2 (PLA2), catalyzing the calcium-independent release of fatty acids from the sn-1 or sn-2 position of glycerophospholipids. For most substrates, PLA1 activity is much higher than PLA2 activity. Shows O-acyltransferase activity, catalyzing the transfer of a fatty acyl group from glycerophospholipid to the hydroxyl group of lysophospholipid. Shows N-acyltransferase activity, catalyzing the calcium-independent transfer of a fatty acyl group at the sn-1 position of phosphatidylcholine (PC) and other glycerophospholipids to the primary amine of phosphatidylethanolamine (PE), forming N-acylphosphatidylethanolamine (NAPE), which serves as precursor for N-acylethanolamines (NAEs). Exhibits high N-acyltransferase activity and low phospholipase A1/2 activity. Required for complete organelle rupture and degradation that occur during eye lens terminal differentiation, when fiber cells that compose the lens degrade all membrane-bound organelles in order to provide lens with transparency to allow the passage of light. Organelle membrane degradation is probably catalyzed by the phospholipase activity. Plays a role in phospholipid metabolism and adipogenesis. This chain is Phospholipase A and acyltransferase 3, found in Pongo abelii (Sumatran orangutan).